Consider the following 359-residue polypeptide: Tyrosine-protein phosphatase non-receptor type 7 (359 aa).

Residues 1–34 (MVQACEGRSRAQLPTLSLGADMTQPPPAKAPAKK) form a disordered region. The segment at 38 to 51 (LQERRGSSVALMLD) is interaction with MAP kinases. Serine 44 bears the Phosphoserine mark. Phosphothreonine is present on threonine 66. 2 positions are modified to phosphoserine: serine 93 and serine 143. A Tyrosine-protein phosphatase domain is found at 97-349 (LEEEFLKIPS…QFLHHTLALY (253 aa)). Substrate is bound by residues aspartate 257, 290–296 (CSAGIGR), and glutamine 334. Residue cysteine 290 is the Phosphocysteine intermediate of the active site. The residue at position 290 (cysteine 290) is a Cysteine sulfenic acid (-SOH).

The protein belongs to the protein-tyrosine phosphatase family. Non-receptor class subfamily. Oxidized at active site cysteine. Treatment with pervanadate (vanadate and H(2)O(2)) or with antigen enhanced oxidation of active site cysteine.

It localises to the cytoplasm. The protein localises to the cytoskeleton. It catalyses the reaction O-phospho-L-tyrosyl-[protein] + H2O = L-tyrosyl-[protein] + phosphate. Inhibited in cells after FCER1A triggering. May play a role in the regulation of T and B-lymphocyte development and signal transduction. In Rattus norvegicus (Rat), this protein is Tyrosine-protein phosphatase non-receptor type 7 (Ptpn7).